Consider the following 427-residue polypeptide: 3-phosphoshikimate 1-carboxyvinyltransferase (427 aa).

The 3-phosphoshikimate site is built by K22, S23, and R27. Position 22 (K22) interacts with phosphoenolpyruvate. The phosphoenolpyruvate site is built by G96 and R124. Residues S170, S171, Q172, S198, D314, N337, and K341 each coordinate 3-phosphoshikimate. Residue Q172 participates in phosphoenolpyruvate binding. The Proton acceptor role is filled by D314. 3 residues coordinate phosphoenolpyruvate: R345, R387, and K412.

The protein belongs to the EPSP synthase family. In terms of assembly, monomer.

The protein resides in the cytoplasm. The catalysed reaction is 3-phosphoshikimate + phosphoenolpyruvate = 5-O-(1-carboxyvinyl)-3-phosphoshikimate + phosphate. The protein operates within metabolic intermediate biosynthesis; chorismate biosynthesis; chorismate from D-erythrose 4-phosphate and phosphoenolpyruvate: step 6/7. Its function is as follows. Catalyzes the transfer of the enolpyruvyl moiety of phosphoenolpyruvate (PEP) to the 5-hydroxyl of shikimate-3-phosphate (S3P) to produce enolpyruvyl shikimate-3-phosphate and inorganic phosphate. The chain is 3-phosphoshikimate 1-carboxyvinyltransferase from Sulfurovum sp. (strain NBC37-1).